The sequence spans 306 residues: Small ribosomal subunit biogenesis GTPase RsgA (306 aa).

Residues Lys77–Leu236 enclose the CP-type G domain. GTP is bound by residues Ser126–Asp129 and Gly179–Thr187. Positions 260, 266, 268, and 274 each coordinate Zn(2+).

The protein belongs to the TRAFAC class YlqF/YawG GTPase family. RsgA subfamily. As to quaternary structure, monomer. Associates with 30S ribosomal subunit, binds 16S rRNA. Requires Zn(2+) as cofactor.

Its subcellular location is the cytoplasm. Functionally, one of several proteins that assist in the late maturation steps of the functional core of the 30S ribosomal subunit. Helps release RbfA from mature subunits. May play a role in the assembly of ribosomal proteins into the subunit. Circularly permuted GTPase that catalyzes slow GTP hydrolysis, GTPase activity is stimulated by the 30S ribosomal subunit. In Onion yellows phytoplasma (strain OY-M), this protein is Small ribosomal subunit biogenesis GTPase RsgA.